The primary structure comprises 498 residues: ATP synthase subunit beta, chloroplastic (498 aa).

An ATP-binding site is contributed by 172-179; the sequence is GGAGVGKT.

The protein belongs to the ATPase alpha/beta chains family. F-type ATPases have 2 components, CF(1) - the catalytic core - and CF(0) - the membrane proton channel. CF(1) has five subunits: alpha(3), beta(3), gamma(1), delta(1), epsilon(1). CF(0) has four main subunits: a(1), b(1), b'(1) and c(9-12).

Its subcellular location is the plastid. It localises to the chloroplast thylakoid membrane. The catalysed reaction is ATP + H2O + 4 H(+)(in) = ADP + phosphate + 5 H(+)(out). Produces ATP from ADP in the presence of a proton gradient across the membrane. The catalytic sites are hosted primarily by the beta subunits. The sequence is that of ATP synthase subunit beta, chloroplastic from Saruma henryi (Upright wild ginger).